The following is a 49-amino-acid chain: Large ribosomal subunit protein bL33 (49 aa).

This sequence belongs to the bacterial ribosomal protein bL33 family.

The sequence is that of Large ribosomal subunit protein bL33 from Clostridium perfringens (strain ATCC 13124 / DSM 756 / JCM 1290 / NCIMB 6125 / NCTC 8237 / Type A).